A 313-amino-acid chain; its full sequence is MPNTAMKKKVLLMGKSGSGKTSMRSIIFANYIARDTRRLGATIDVEHSHVRFLGNLVLNLWDCGGQDTFMENYFTSQRDNIFRNVEVLIYVFDVESRELEKDMHYYQSCLEAILQNSPDAKIFCLVHKMDLVQEDQRDLIFKEREEDLRRLSRPLECACFRTSIWDETLYKAWSSIVYQLIPNVQQLEMNLRNFAQIIEADEVLLFERATFLVISHYQCKEQRDVHRFEKISNIIKQFKLSCSKLAASFQSMEVRNSNFAAFIDIFTSNTYVMVVMSDPSIPSAATLINIRNARKHFEKLERVDGPKHSLLMR.

GTP-binding residues include S16, G17, G19, K20, T21, S22, T36, T42, G65, and H127. Residues G17, G19, K20, T21, and S22 each contribute to the GDP site. Residues H127 and D130 each contribute to the GDP site. K142 participates in a covalent cross-link: Glycyl lysine isopeptide (Lys-Gly) (interchain with G-Cter in ubiquitin). The GDP site is built by L148 and I164. GTP is bound at residue I164. Glycyl lysine isopeptide (Lys-Gly) (interchain with G-Cter in ubiquitin) cross-links involve residues K220, K230, and K244. A Phosphoserine modification is found at S309.

This sequence belongs to the GTR/RAG GTP-binding protein family. In terms of assembly, can occur as a homodimer or as a heterodimer with RRAGC or RRAGD in a sequence-independent manner; heterodimerization stabilizes proteins of the heterodimer. The GTP-bound form of RRAGA (in complex with the GDP-bound form of RRAGC or RRAGD) interacts with RPTOR, thereby promoting recruitment of mTORC1 to the lysosomes. The Rag heterodimer interacts with SLC38A9; the probable amino acid sensor. The Rag heterodimer interacts with the Ragulator complex. The GTP-bound form of RRAGA interacts with NOL8. Component of the lysosomal folliculin complex (LFC), composed of FLCN, FNIP1 (or FNIP2), RagA/RRAGA or RagB/RRAGB GDP-bound, RagC/RRAGC or RagD/RRAGD GTP-bound, and Ragulator. Interacts with SH3BP4; the interaction with this negative regulator is most probably direct, preferentially occurs with the inactive GDP-bound form of RRAGA and is negatively regulated by amino acids. Interacts (polyubiquitinated) with TSC2. Interacts with SESN1, SESN2 and SESN3. Interacts with PIP4P1. Interacts with GPR137B. Interacts with WDR83; this interaction regulates the spatiotemporal localization of mTORC1 to the lysosomal surface. In terms of processing, polybiquitinated via 'Lys-63'-linked polyubiquitination by RNF152 in response to amino acid starvation: polyubiquitination of the GDP-bound inactive form by RNF152 promotes RRAGA inactivation and interaction with the GATOR1 complex. This does not affect RRAGA degradation.

The protein resides in the cytoplasm. Its subcellular location is the nucleus. The protein localises to the lysosome membrane. It carries out the reaction GTP + H2O = GDP + phosphate + H(+). The activation of GTP-binding proteins is generally mediated by a guanine exchange factor (GEF), while inactivation through hydrolysis of bound GTP is catalyzed by a GTPase activating protein (GAP). The Ragulator complex functions as a GEF and promotes the active GTP-bound form. The GATOR1 complex functions as a GAP and stimulates RRAGA GTPase activity to turn it into its inactive GDP-bound form, preventing mTORC1 recruitment and activation. Guanine nucleotide-binding protein that plays a crucial role in the cellular response to amino acid availability through regulation of the mTORC1 signaling cascade. Forms heterodimeric Rag complexes with RagC/RRAGC or RagD/RRAGD and cycles between an inactive GDP-bound and an active GTP-bound form: RagA/RRAGA is in its active form when GTP-bound RagA/RRAGA forms a complex with GDP-bound RagC/RRAGC (or RagD/RRAGD) and in an inactive form when GDP-bound RagA/RRAGA heterodimerizes with GTP-bound RagC/RRAGC (or RagD/RRAGD). In its GTP-bound active form, promotes the recruitment of mTORC1 to the lysosomes and its subsequent activation by the GTPase RHEB. Involved in the RCC1/Ran-GTPase pathway. May play a direct role in a TNF-alpha signaling pathway leading to induction of cell death. This is Ras-related GTP-binding protein A from Bos taurus (Bovine).